The sequence spans 408 residues: Succinylornithine transaminase (408 aa).

An N6-(pyridoxal phosphate)lysine modification is found at Lys252.

This sequence belongs to the class-III pyridoxal-phosphate-dependent aminotransferase family. AstC subfamily. The cofactor is pyridoxal 5'-phosphate.

It catalyses the reaction N(2)-succinyl-L-ornithine + 2-oxoglutarate = N-succinyl-L-glutamate 5-semialdehyde + L-glutamate. Its pathway is amino-acid degradation; L-arginine degradation via AST pathway; L-glutamate and succinate from L-arginine: step 3/5. Its function is as follows. Catalyzes the transamination of N(2)-succinylornithine and alpha-ketoglutarate into N(2)-succinylglutamate semialdehyde and glutamate. Can also act as an acetylornithine aminotransferase. This chain is Succinylornithine transaminase, found in Salmonella typhimurium (strain LT2 / SGSC1412 / ATCC 700720).